A 208-amino-acid chain; its full sequence is Large ribosomal subunit protein bL25 (208 aa).

Positions 184–208 are disordered; that stretch reads VTISGTSSDQDTSGGESSGTTTSED. Residues 187–208 are compositionally biased toward low complexity; the sequence is SGTSSDQDTSGGESSGTTTSED.

This sequence belongs to the bacterial ribosomal protein bL25 family. CTC subfamily. Part of the 50S ribosomal subunit; part of the 5S rRNA/L5/L18/L25 subcomplex. Contacts the 5S rRNA. Binds to the 5S rRNA independently of L5 and L18.

In terms of biological role, this is one of the proteins that binds to the 5S RNA in the ribosome where it forms part of the central protuberance. The protein is Large ribosomal subunit protein bL25 of Ehrlichia ruminantium (strain Gardel).